The sequence spans 232 residues: 7-cyano-7-deazaguanine synthase (232 aa).

Cysteine 7 to alanine 17 contacts ATP. Residues cysteine 185, cysteine 193, cysteine 196, and cysteine 199 each coordinate Zn(2+).

It belongs to the QueC family. Zn(2+) is required as a cofactor.

The enzyme catalyses 7-carboxy-7-deazaguanine + NH4(+) + ATP = 7-cyano-7-deazaguanine + ADP + phosphate + H2O + H(+). It participates in purine metabolism; 7-cyano-7-deazaguanine biosynthesis. Catalyzes the ATP-dependent conversion of 7-carboxy-7-deazaguanine (CDG) to 7-cyano-7-deazaguanine (preQ(0)). The chain is 7-cyano-7-deazaguanine synthase from Brucella abortus (strain S19).